Consider the following 283-residue polypeptide: NAD kinase (283 aa).

Asp73 functions as the Proton acceptor in the catalytic mechanism. Residues 73-74, 146-147, His157, His176, Asp178, 189-194, and Ala213 each bind NAD(+); these read DG, NE, and TAYNLS.

Belongs to the NAD kinase family. The cofactor is a divalent metal cation.

The protein localises to the cytoplasm. It catalyses the reaction NAD(+) + ATP = ADP + NADP(+) + H(+). Involved in the regulation of the intracellular balance of NAD and NADP, and is a key enzyme in the biosynthesis of NADP. Catalyzes specifically the phosphorylation on 2'-hydroxyl of the adenosine moiety of NAD to yield NADP. The chain is NAD kinase from Haloarcula marismortui (strain ATCC 43049 / DSM 3752 / JCM 8966 / VKM B-1809) (Halobacterium marismortui).